We begin with the raw amino-acid sequence, 78 residues long: Beta sliding clamp (78 aa).

The protein belongs to the beta sliding clamp family. Forms a ring-shaped head-to-tail homodimer around DNA which binds and tethers DNA polymerases and other proteins to the DNA. The DNA replisome complex has a single clamp-loading complex (3 tau and 1 each of delta, delta', psi and chi subunits) which binds 3 Pol III cores (1 core on the leading strand and 2 on the lagging strand) each with a beta sliding clamp dimer. Additional proteins in the replisome are other copies of gamma, psi and chi, Ssb, DNA helicase and RNA primase.

It localises to the cytoplasm. Functionally, confers DNA tethering and processivity to DNA polymerases and other proteins. Acts as a clamp, forming a ring around DNA (a reaction catalyzed by the clamp-loading complex) which diffuses in an ATP-independent manner freely and bidirectionally along dsDNA. Initially characterized for its ability to contact the catalytic subunit of DNA polymerase III (Pol III), a complex, multichain enzyme responsible for most of the replicative synthesis in bacteria; Pol III exhibits 3'-5' exonuclease proofreading activity. The beta chain is required for initiation of replication as well as for processivity of DNA replication. This Serratia marcescens protein is Beta sliding clamp (dnaN).